The sequence spans 924 residues: DNA repair and recombination protein RDH54 (924 aa).

The segment covering 1–10 (MQIPKYENKP) has biased composition (basic and acidic residues). Disordered stretches follow at residues 1–21 (MQIPKYENKPFKPPRRVGSNK) and 155–182 (EALSQNMGNPNPPTTSTTETVPSTKNDG). The segment covering 168-178 (TTSTTETVPST) has biased composition (low complexity). The 189-residue stretch at 299-487 (LENDSDISGC…FTIIDFINPG (189 aa)) folds into the Helicase ATP-binding domain. 346–353 (IPLTGLCK) is a binding site for ATP. A DEGH box motif is present at residues 472-475 (NDLN). A Glycyl lysine isopeptide (Lys-Gly) (interchain with G-Cter in ubiquitin) cross-link involves residue lysine 615. Residues 631–790 (KLRVLMTLLE…DSEMRNKESS (160 aa)) enclose the Helicase C-terminal domain.

It belongs to the SNF2/RAD54 helicase family. In terms of assembly, interacts with RAD51 and DMC1.

It is found in the nucleus. It catalyses the reaction ATP + H2O = ADP + phosphate + H(+). Its function is as follows. Involved in the recombinational repair of double-strand breaks (DSB) in DNA during mitosis and meiosis. Has DNA dependent ATPase activity. Promotes D-loop (displacement loop) formation with RAD51 recombinase. Modifies the topology of double-stranded DNA during the D-loop reaction to facilitate the invasion of the homologous duplex molecule by the initiating single-stranded DNA substrate. Required for adaptation from G2/M checkpoint arrest induced by a double strand break, by participating in monitoring the extent of single-stranded DNA produced by resection of DNA ends. This role is distinct from its roles in recombination. Promotes colocalization of RAD51 and DMC1 during meiotic recombination. Involved in crossover interference. In Saccharomyces cerevisiae (strain AWRI1631) (Baker's yeast), this protein is DNA repair and recombination protein RDH54 (RDH54).